The primary structure comprises 514 residues: Adenylosuccinate synthetase 1, chloroplastic (514 aa).

Residues 1-73 (MAMAAAAAVA…AQAIERESVK (73 aa)) constitute a chloroplast transit peptide. GTP-binding positions include 100–106 (GDEGKGK) and 128–130 (GHT). Catalysis depends on D101, which acts as the Proton acceptor. Residues D101 and G128 each coordinate Mg(2+). IMP-binding positions include 101–104 (DEGK), 126–129 (NAGH), T218, R232, Q312, T327, and R391. Residue H129 is the Proton donor of the active site. Residue 387-393 (TTTGRPR) coordinates substrate. Residues R393, 419–421 (KLD), and 502–504 (GVG) contribute to the GTP site.

It belongs to the adenylosuccinate synthetase family. As to quaternary structure, homodimer. The cofactor is Mg(2+).

Its subcellular location is the plastid. It is found in the chloroplast. It carries out the reaction IMP + L-aspartate + GTP = N(6)-(1,2-dicarboxyethyl)-AMP + GDP + phosphate + 2 H(+). It functions in the pathway purine metabolism; AMP biosynthesis via de novo pathway; AMP from IMP: step 1/2. Functionally, plays an important role in the de novo pathway and in the salvage pathway of purine nucleotide biosynthesis. Catalyzes the first committed step in the biosynthesis of AMP from IMP. This is Adenylosuccinate synthetase 1, chloroplastic from Physcomitrium patens (Spreading-leaved earth moss).